Reading from the N-terminus, the 259-residue chain is Proteasome subunit alpha (259 aa).

A disordered region spans residues 222–259 (RITGPALEQLIPAEPAPASEPAPESKPDTETKPADPQD). Residues 244–259 (PESKPDTETKPADPQD) show a composition bias toward basic and acidic residues.

Belongs to the peptidase T1A family. In terms of assembly, the 20S proteasome core is composed of 14 alpha and 14 beta subunits that assemble into four stacked heptameric rings, resulting in a barrel-shaped structure. The two inner rings, each composed of seven catalytic beta subunits, are sandwiched by two outer rings, each composed of seven alpha subunits. The catalytic chamber with the active sites is on the inside of the barrel. Has a gated structure, the ends of the cylinder being occluded by the N-termini of the alpha-subunits. Is capped by the proteasome-associated ATPase, ARC.

It is found in the cytoplasm. It functions in the pathway protein degradation; proteasomal Pup-dependent pathway. With respect to regulation, the formation of the proteasomal ATPase ARC-20S proteasome complex, likely via the docking of the C-termini of ARC into the intersubunit pockets in the alpha-rings, may trigger opening of the gate for substrate entry. Interconversion between the open-gate and close-gate conformations leads to a dynamic regulation of the 20S proteasome proteolysis activity. In terms of biological role, component of the proteasome core, a large protease complex with broad specificity involved in protein degradation. The sequence is that of Proteasome subunit alpha from Rhodococcus jostii (strain RHA1).